The primary structure comprises 94 residues: Small ribosomal subunit protein uS19 (94 aa).

This sequence belongs to the universal ribosomal protein uS19 family.

Protein S19 forms a complex with S13 that binds strongly to the 16S ribosomal RNA. In Clostridium novyi (strain NT), this protein is Small ribosomal subunit protein uS19.